The sequence spans 365 residues: Protein-glutamate methylesterase/protein-glutamine glutaminase 2 (365 aa).

Residues 18 to 135 (RVLIVDDSAM…GQGLPAIMRD (118 aa)) enclose the Response regulatory domain. Asp69 bears the 4-aspartylphosphate mark. One can recognise a CheB-type methylesterase domain in the interval 162-355 (GASEDWIHAL…ARMMLAAAAD (194 aa)). Catalysis depends on residues Ser174, His200, and Asp297.

This sequence belongs to the CheB family. In terms of processing, phosphorylated by CheA. Phosphorylation of the N-terminal regulatory domain activates the methylesterase activity.

It localises to the cytoplasm. The enzyme catalyses [protein]-L-glutamate 5-O-methyl ester + H2O = L-glutamyl-[protein] + methanol + H(+). The catalysed reaction is L-glutaminyl-[protein] + H2O = L-glutamyl-[protein] + NH4(+). Functionally, involved in chemotaxis. Part of a chemotaxis signal transduction system that modulates chemotaxis in response to various stimuli. Catalyzes the demethylation of specific methylglutamate residues introduced into the chemoreceptors (methyl-accepting chemotaxis proteins or MCP) by CheR. Also mediates the irreversible deamidation of specific glutamine residues to glutamic acid. The protein is Protein-glutamate methylesterase/protein-glutamine glutaminase 2 of Cereibacter sphaeroides (strain ATCC 17023 / DSM 158 / JCM 6121 / CCUG 31486 / LMG 2827 / NBRC 12203 / NCIMB 8253 / ATH 2.4.1.) (Rhodobacter sphaeroides).